The primary structure comprises 474 residues: tRNA-2-methylthio-N(6)-dimethylallyladenosine synthase (474 aa).

Residues 3–120 enclose the MTTase N-terminal domain; that stretch reads KKLHIKTWGC…LPEMINSVRG (118 aa). [4Fe-4S] cluster is bound by residues Cys12, Cys49, Cys83, Cys157, Cys161, and Cys164. The Radical SAM core domain maps to 143 to 378; that stretch reads RADGPSAFVS…INQQVTAWSR (236 aa). The TRAM domain maps to 378–441; it reads RRMLGTTQRI…TNSMRGKVVR (64 aa).

Belongs to the methylthiotransferase family. MiaB subfamily. Monomer. The cofactor is [4Fe-4S] cluster.

It localises to the cytoplasm. The enzyme catalyses N(6)-dimethylallyladenosine(37) in tRNA + (sulfur carrier)-SH + AH2 + 2 S-adenosyl-L-methionine = 2-methylsulfanyl-N(6)-dimethylallyladenosine(37) in tRNA + (sulfur carrier)-H + 5'-deoxyadenosine + L-methionine + A + S-adenosyl-L-homocysteine + 2 H(+). Its function is as follows. Catalyzes the methylthiolation of N6-(dimethylallyl)adenosine (i(6)A), leading to the formation of 2-methylthio-N6-(dimethylallyl)adenosine (ms(2)i(6)A) at position 37 in tRNAs that read codons beginning with uridine. The polypeptide is tRNA-2-methylthio-N(6)-dimethylallyladenosine synthase (Enterobacter sp. (strain 638)).